A 659-amino-acid polypeptide reads, in one-letter code: MRFEEEIGSLQMLCDQFQNKINTLEKQMNEEKKDYVQKLHRLHEKNGEAIDKMKQLDHTMQAVSTKVVHLGDQLESVDQPRSRAHDAHQLMQHFDEFLSDQPLNSMIFTDPDKLLESADLVHKLYSISQELNKDKFANVQARIGQRYKVVEDLLIEEFVRSQRDEKKMAEVAKILSEFKGYSGCVDRYVDFLCQSIHPRGDGGEILADCLQLCRTQQPRISAIFPSPHTVMQKLVLNIFTGRMKETITARLRECKDTDDQEHYLRDLAYLYSSTLKMCKELEKLHISPDSAFLSTLTDSIFQRYIATYCSEELKYLNDQCSNLLQRFYESKKHVKKQIGGGLHELKRDVAARLMNVETYGGETFVAEDVAISILQETKNAFGRANQLCDKEELPRHVENIVDVLLKYLYGEHLDYAVETGLAGISLAESKTEPPAYFFSVVAKCTSVILLMIKQFEDPIFPIIKETIVEPSVAKKWQQSLRSLESKMSLGLERQLNSIVGYVKFLFSEQKKTDFRPDSQQIDIRVSPQCQLASRFLANQVAAMELGCDGENLEALQSDLATRLFKFMLTHIQQFTYNSTGAVLLLCDVGELRTLVSKWRVQNALTQWESLQALTNLLAVLPDQVNETAHSSLLENVDRQLIHDFVRLRTDFRSIKNFQI.

Residues 1–58 (MRFEEEIGSLQMLCDQFQNKINTLEKQMNEEKKDYVQKLHRLHEKNGEAIDKMKQLDH) adopt a coiled-coil conformation.

This sequence belongs to the SEC10 family. In terms of assembly, the exocyst complex is composed of sec-3/exoc1, sec-5/exoc2, sec-6/exoc3, sec-8/exoc4, sec-10/exoc5, sec-15/exoc6, exo-70/exoc7 and exo-84/exoc8.

In terms of biological role, component of the exocyst complex involved in the docking of exocytic vesicles with fusion sites on the plasma membrane. The protein is Exocyst complex component 5 (sec-10) of Caenorhabditis elegans.